A 302-amino-acid polypeptide reads, in one-letter code: Proteasome subunit beta (302 aa).

Residues 1-50 (MTITGSRGFPDGYLAPGSSFLDFAAQHAPTIMPGTQPTFDTIPQDIAPHG) constitute a propeptide, removed in mature form; by autocatalysis. Residue T51 is the Nucleophile of the active site. Residues 277 to 302 (EPGRDGPGNRLPSQGSATIIPESDQS) are disordered. A compositionally biased stretch (polar residues) spans 287-302 (LPSQGSATIIPESDQS).

Belongs to the peptidase T1B family. As to quaternary structure, the 20S proteasome core is composed of 14 alpha and 14 beta subunits that assemble into four stacked heptameric rings, resulting in a barrel-shaped structure. The two inner rings, each composed of seven catalytic beta subunits, are sandwiched by two outer rings, each composed of seven alpha subunits. The catalytic chamber with the active sites is on the inside of the barrel. Has a gated structure, the ends of the cylinder being occluded by the N-termini of the alpha-subunits. Is capped by the proteasome-associated ATPase, ARC.

It localises to the cytoplasm. The catalysed reaction is Cleavage of peptide bonds with very broad specificity.. The protein operates within protein degradation; proteasomal Pup-dependent pathway. With respect to regulation, the formation of the proteasomal ATPase ARC-20S proteasome complex, likely via the docking of the C-termini of ARC into the intersubunit pockets in the alpha-rings, may trigger opening of the gate for substrate entry. Interconversion between the open-gate and close-gate conformations leads to a dynamic regulation of the 20S proteasome proteolysis activity. Component of the proteasome core, a large protease complex with broad specificity involved in protein degradation. This is Proteasome subunit beta from Jonesia denitrificans (strain ATCC 14870 / DSM 20603 / BCRC 15368 / CIP 55.134 / JCM 11481 / NBRC 15587 / NCTC 10816 / Prevot 55134) (Listeria denitrificans).